A 652-amino-acid chain; its full sequence is ATP-dependent zinc metalloprotease FtsH (652 aa).

The Cytoplasmic portion of the chain corresponds to Met-1–Asn-11. A helical transmembrane segment spans residues Pro-12–Gly-32. At Asn-33 to Ser-131 the chain is on the extracellular side. A helical membrane pass occupies residues Gly-132–Phe-152. Residues Ser-153–Lys-652 lie on the Cytoplasmic side of the membrane. Position 227 to 234 (Gly-227 to Thr-234) interacts with ATP. His-449 is a Zn(2+) binding site. Glu-450 is a catalytic residue. Residues His-453 and Asp-525 each contribute to the Zn(2+) site. Residues Met-628–Lys-652 are disordered. A compositionally biased stretch (basic and acidic residues) spans Glu-634–Lys-652.

The protein in the central section; belongs to the AAA ATPase family. This sequence in the C-terminal section; belongs to the peptidase M41 family. Homohexamer. The cofactor is Zn(2+).

The protein localises to the cell membrane. Its function is as follows. Acts as a processive, ATP-dependent zinc metallopeptidase for both cytoplasmic and membrane proteins. Plays a role in the quality control of integral membrane proteins. In Streptococcus pneumoniae (strain ATCC BAA-255 / R6), this protein is ATP-dependent zinc metalloprotease FtsH.